A 168-amino-acid polypeptide reads, in one-letter code: Large ribosomal subunit protein bL17 (168 aa).

Positions 121–146 (AEAEGGEEKAEQKTEKKAAKAKEPKA) are enriched in basic and acidic residues. The tract at residues 121–168 (AEAEGGEEKAEQKTEKKAAKAKEPKAAKAPKKAAAKPKAKAEKKGAEE) is disordered. Over residues 148 to 158 (KAPKKAAAKPK) the composition is skewed to basic residues. The segment covering 159–168 (AKAEKKGAEE) has biased composition (basic and acidic residues).

This sequence belongs to the bacterial ribosomal protein bL17 family. In terms of assembly, part of the 50S ribosomal subunit. Contacts protein L32.

In Anaeromyxobacter sp. (strain Fw109-5), this protein is Large ribosomal subunit protein bL17.